Reading from the N-terminus, the 223-residue chain is Probable amino-acid ABC transporter permease protein PatM (223 aa).

One can recognise an ABC transmembrane type-1 domain in the interval 19 to 210; sequence LGTTMEMATW…GVVVILTRVQ (192 aa). The next 5 helical transmembrane spans lie at 23–43, 59–78, 90–110, 156–176, and 186–206; these read MEMA…LANI, ISFF…YYGL, AFSA…AESI, FIDM…EIMA, and FRFF…VVIL.

The protein belongs to the binding-protein-dependent transport system permease family. HisMQ subfamily.

Its subcellular location is the cell inner membrane. In terms of biological role, probably part of a binding-protein-dependent transport system for an amino acid. Probably responsible for the translocation of the substrate across the membrane. This is Probable amino-acid ABC transporter permease protein PatM (patM) from Vibrio harveyi (Beneckea harveyi).